Reading from the N-terminus, the 211-residue chain is ATP-dependent Clp protease proteolytic subunit (211 aa).

Residue Ser-114 is the Nucleophile of the active site. His-139 is an active-site residue.

The protein belongs to the peptidase S14 family. In terms of assembly, fourteen ClpP subunits assemble into 2 heptameric rings which stack back to back to give a disk-like structure with a central cavity, resembling the structure of eukaryotic proteasomes.

The protein resides in the cytoplasm. It catalyses the reaction Hydrolysis of proteins to small peptides in the presence of ATP and magnesium. alpha-casein is the usual test substrate. In the absence of ATP, only oligopeptides shorter than five residues are hydrolyzed (such as succinyl-Leu-Tyr-|-NHMec, and Leu-Tyr-Leu-|-Tyr-Trp, in which cleavage of the -Tyr-|-Leu- and -Tyr-|-Trp bonds also occurs).. In terms of biological role, cleaves peptides in various proteins in a process that requires ATP hydrolysis. Has a chymotrypsin-like activity. Plays a major role in the degradation of misfolded proteins. The protein is ATP-dependent Clp protease proteolytic subunit of Pseudomonas fluorescens (strain SBW25).